The chain runs to 428 residues: MKIVKVIGREILDSRGNPTIEVDVHLESGFIGRASVPSGASTGKNEALELRDGDKQRFLGKGVLKAVSNINKIIAPALLSRNVFDQRGIDKVMLSLDGTSTKSKLGANAILGVSLAVARAAAEYLQIPLYRYIGGVNTYILPIPMMNIINGGSHSDAPIAFQEFMIRPIGASSFREGLRMGVEVFHALKKVLHDRGLSTAVGDEGGFAPTLKGTEDALESIIQAIDNAGYKPVEDITIGLDCASSEFYKNGIYDYTKFEGTIGARRTSIQQVEYLSELVSKYPIDSIEDGMSENDWDGWKLLTSKIGNKVQLVGDDLFVTNVEFLKKGIEQGCANSILVKVNQIGSLTETLDSIEMAHRANYNSVVSHRSGETEDSTIADIAVATNSGQIKTGSLSRSDRMAKYNQLLRIEEELGDKAFYGYKALKMC.

Glutamine 162 contributes to the (2R)-2-phosphoglycerate binding site. The active-site Proton donor is glutamate 204. Mg(2+)-binding residues include aspartate 241, glutamate 288, and aspartate 315. (2R)-2-phosphoglycerate-binding residues include lysine 340, arginine 369, serine 370, and lysine 391. Catalysis depends on lysine 340, which acts as the Proton acceptor.

The protein belongs to the enolase family. Mg(2+) is required as a cofactor.

It localises to the cytoplasm. Its subcellular location is the secreted. The protein localises to the cell surface. It catalyses the reaction (2R)-2-phosphoglycerate = phosphoenolpyruvate + H2O. Its pathway is carbohydrate degradation; glycolysis; pyruvate from D-glyceraldehyde 3-phosphate: step 4/5. Catalyzes the reversible conversion of 2-phosphoglycerate (2-PG) into phosphoenolpyruvate (PEP). It is essential for the degradation of carbohydrates via glycolysis. This Azobacteroides pseudotrichonymphae genomovar. CFP2 protein is Enolase.